Consider the following 193-residue polypeptide: Superoxide dismutase [Fe] (193 aa).

His27, His74, Asp157, and His161 together coordinate Fe cation.

Belongs to the iron/manganese superoxide dismutase family. As to quaternary structure, monomer. Fe cation serves as cofactor.

It catalyses the reaction 2 superoxide + 2 H(+) = H2O2 + O2. Its function is as follows. Destroys superoxide anion radicals which are normally produced within the cells and which are toxic to biological systems. Involved in the metabolism of 4-aminophenol. May have an indirect role in hydroxyquinol metabolism by scavenging and detoxifying reactive species that promote its auto-oxidation. The chain is Superoxide dismutase [Fe] from Burkholderia sp.